Consider the following 86-residue polypeptide: Cell division topological specificity factor (86 aa).

The protein belongs to the MinE family.

Its function is as follows. Prevents the cell division inhibition by proteins MinC and MinD at internal division sites while permitting inhibition at polar sites. This ensures cell division at the proper site by restricting the formation of a division septum at the midpoint of the long axis of the cell. The sequence is that of Cell division topological specificity factor from Shewanella piezotolerans (strain WP3 / JCM 13877).